The following is a 393-amino-acid chain: NAD(P)H-quinone oxidoreductase subunit H, chloroplastic (393 aa).

The protein belongs to the complex I 49 kDa subunit family. In terms of assembly, NDH is composed of at least 16 different subunits, 5 of which are encoded in the nucleus.

It localises to the plastid. Its subcellular location is the chloroplast thylakoid membrane. The catalysed reaction is a plastoquinone + NADH + (n+1) H(+)(in) = a plastoquinol + NAD(+) + n H(+)(out). It carries out the reaction a plastoquinone + NADPH + (n+1) H(+)(in) = a plastoquinol + NADP(+) + n H(+)(out). NDH shuttles electrons from NAD(P)H:plastoquinone, via FMN and iron-sulfur (Fe-S) centers, to quinones in the photosynthetic chain and possibly in a chloroplast respiratory chain. The immediate electron acceptor for the enzyme in this species is believed to be plastoquinone. Couples the redox reaction to proton translocation, and thus conserves the redox energy in a proton gradient. The sequence is that of NAD(P)H-quinone oxidoreductase subunit H, chloroplastic from Ipomoea purpurea (Common morning glory).